A 282-amino-acid polypeptide reads, in one-letter code: Small-conductance mechanosensitive channel (282 aa).

Residues 1–23 (MWADIYHKLVEIYDIKAVKFLLD) are Periplasmic-facing. The helical transmembrane segment at 24–46 (VLKILIIAFIGIKFADFLIYRFY) threads the bilayer. Residues 47–66 (KLYSKSKIQLPQRKIDTLTS) lie on the Cytoplasmic side of the membrane. The helical transmembrane segment at 67–87 (LTKNAVRYIIYFLAGASILKL) threads the bilayer. The Periplasmic segment spans residues 88-89 (FN). The helical transmembrane segment at 90–110 (IDMTSLLAVAGIGSLAIGFGA) threads the bilayer. Over 111–282 (QNLVKDMISG…TVILSEKKTN (172 aa)) the chain is Cytoplasmic.

It belongs to the MscS (TC 1.A.23) family. Homoheptamer.

Its subcellular location is the cell inner membrane. In terms of biological role, mechanosensitive ion channel that participates in the regulation of osmotic pressure changes within the cell, opening in response to stretch forces in the membrane lipid bilayer, without the need for other proteins. Has high selectivity for anions, and may contribute to resistance to hypoosmotic shock. In Caldanaerobacter subterraneus subsp. tengcongensis (strain DSM 15242 / JCM 11007 / NBRC 100824 / MB4) (Thermoanaerobacter tengcongensis), this protein is Small-conductance mechanosensitive channel.